The sequence spans 192 residues: Fumarylpyruvate hydrolase (192 aa).

Residues Glu41, Glu43, and Asp72 each coordinate a divalent metal cation.

Belongs to the FAH family. It depends on Mg(2+) as a cofactor. The cofactor is Mn(2+).

It carries out the reaction 3-fumarylpyruvate + H2O = fumarate + pyruvate + H(+). It participates in aromatic compound metabolism; naphthalene degradation. Its function is as follows. Involved in the catabolism of gentisate (2,5-dihydroxybenzoate) a key intermediates in the aerobic pathways for the metabolism of a large number of aromatic compoun such as naphthalene. Catalyzes the hydrolytic cleavage of fumarylpyruvate to form fumarate and pyruvate. The sequence is that of Fumarylpyruvate hydrolase from Ralstonia sp.